The following is a 691-amino-acid chain: Pentatricopeptide repeat-containing protein ATP4, chloroplastic (691 aa).

Over residues 1–17 (MASLPLCRSPSSLLPSW) the composition is skewed to low complexity. Residues 1-35 (MASLPLCRSPSSLLPSWPHRPISASFNPKNPSSPV) constitute a chloroplast transit peptide. Residues 1-76 (MASLPLCRSP…SSNTRFLWVN (76 aa)) are disordered. Positions 24–33 (ASFNPKNPSS) are enriched in polar residues. A compositionally biased stretch (pro residues) spans 45–56 (PPQPQDPSPPSD). A compositionally biased stretch (polar residues) spans 61–76 (GTRPSSSSNTRFLWVN). PPR repeat units lie at residues 163–197 (KVIL…GVQP), 198–232 (DNAT…GCSP), 233–267 (DMLT…KWQL), 268–302 (DPVI…GVRP), 303–337 (NLVV…QVQP), 338–372 (SRAT…AMGI), 373–403 (DVML…MKAS), 411–445 (DSWS…GFKP), 446–480 (NIFV…GIIP), and 546–580 (KMPY…GIYA). In terms of domain architecture, Smr spans 592 to 677 (LHLRGLSVGA…WFLTTNVAAK (86 aa)).

The protein belongs to the PPR family. P subfamily.

The protein localises to the plastid. It is found in the chloroplast stroma. Its function is as follows. Involved in translation and accumulation of chloroplast ATP synthase subunits. Interacts with the 5'-UTR of the chloroplast bicistronic atpB and atpE mRNA and activates its translation by facilitating ribosome association with the mRNA. Required for accumulation and activity of the chloroplast ATP synthase. Enhances atpA translation and is required for accumulation of specific processed atpF and psaJ transcripts. Required for the stabilization of bicistronic rpl16 and rpl14 mRNAs. The polypeptide is Pentatricopeptide repeat-containing protein ATP4, chloroplastic (Zea mays (Maize)).